The sequence spans 203 residues: Molybdenum cofactor guanylyltransferase (203 aa).

Residues 20 to 22 (LAG), K33, N61, D78, and D108 contribute to the GTP site. D108 contacts Mg(2+).

Belongs to the MobA family. Monomer. Requires Mg(2+) as cofactor.

It localises to the cytoplasm. It catalyses the reaction Mo-molybdopterin + GTP + H(+) = Mo-molybdopterin guanine dinucleotide + diphosphate. Transfers a GMP moiety from GTP to Mo-molybdopterin (Mo-MPT) cofactor (Moco or molybdenum cofactor) to form Mo-molybdopterin guanine dinucleotide (Mo-MGD) cofactor. This chain is Molybdenum cofactor guanylyltransferase, found in Vibrio cholerae serotype O1 (strain ATCC 39315 / El Tor Inaba N16961).